A 52-amino-acid chain; its full sequence is Superoxide dismutase [Cu-Zn] 2 (52 aa).

H44 provides a ligand contact to Cu cation.

This sequence belongs to the Cu-Zn superoxide dismutase family. In terms of assembly, homodimer. Requires Cu cation as cofactor. It depends on Zn(2+) as a cofactor.

It localises to the cytoplasm. It carries out the reaction 2 superoxide + 2 H(+) = H2O2 + O2. Destroys radicals which are normally produced within the cells and which are toxic to biological systems. This chain is Superoxide dismutase [Cu-Zn] 2, found in Debaryomyces hansenii (Yeast).